The sequence spans 246 residues: Biosynthetic peptidoglycan transglycosylase (246 aa).

The helical transmembrane segment at F28–P48 threads the bilayer.

It belongs to the glycosyltransferase 51 family.

The protein localises to the cell inner membrane. The catalysed reaction is [GlcNAc-(1-&gt;4)-Mur2Ac(oyl-L-Ala-gamma-D-Glu-L-Lys-D-Ala-D-Ala)](n)-di-trans,octa-cis-undecaprenyl diphosphate + beta-D-GlcNAc-(1-&gt;4)-Mur2Ac(oyl-L-Ala-gamma-D-Glu-L-Lys-D-Ala-D-Ala)-di-trans,octa-cis-undecaprenyl diphosphate = [GlcNAc-(1-&gt;4)-Mur2Ac(oyl-L-Ala-gamma-D-Glu-L-Lys-D-Ala-D-Ala)](n+1)-di-trans,octa-cis-undecaprenyl diphosphate + di-trans,octa-cis-undecaprenyl diphosphate + H(+). The protein operates within cell wall biogenesis; peptidoglycan biosynthesis. In terms of biological role, peptidoglycan polymerase that catalyzes glycan chain elongation from lipid-linked precursors. In Pasteurella multocida (strain Pm70), this protein is Biosynthetic peptidoglycan transglycosylase.